The sequence spans 256 residues: Floral homeotic protein APETALA 1 (256 aa).

An MADS-box domain is found at 1-61; that stretch reads MGRGRVQLKR…GKLFEYSTDS (61 aa). The K-box domain occupies 88 to 178; sequence NTNWSMEYNR…SKQIKEREKI (91 aa). The disordered stretch occupies residues 184-206; sequence EQWDQQNHGHNMPPPPPPQQHQI.

In terms of assembly, homodimer capable of binding to CArG-box sequences.

Its subcellular location is the nucleus. Its function is as follows. Transcription factor that promotes early floral meristem identity in synergy with LEAFY. Displays a redundant function with CAULIFLOWER in the up-regulation of LEAFY. Required subsequently for the transition of an inflorescence meristem into a floral meristem, and for the normal development of sepals and petals in flowers. Regulates positively B class homeotic proteins. The chain is Floral homeotic protein APETALA 1 (AP1) from Arabidopsis lyrata subsp. lyrata (Lyre-leaved rock-cress).